The sequence spans 138 residues: Basic phospholipase A2 BP-II (138 aa).

The first 16 residues, Met-1–Gly-16, serve as a signal peptide directing secretion. Intrachain disulfides connect Cys-42–Cys-132, Cys-44–Cys-60, Cys-59–Cys-112, Cys-65–Cys-138, Cys-66–Cys-105, Cys-73–Cys-98, and Cys-91–Cys-103. Gly-45 and Gly-47 together coordinate Ca(2+). His-63 is a catalytic residue. The active site involves Asp-106.

Belongs to the phospholipase A2 family. Group II subfamily. K49 sub-subfamily. In terms of assembly, exists as a monomer in both solution and crystal states. In the presence of SDS or probably in the presence of phospholipids, assembles to form SDS-resistant stable oligomers. The cofactor is Ca(2+). Expressed by the venom gland.

It is found in the secreted. It carries out the reaction a 1,2-diacyl-sn-glycero-3-phosphocholine + H2O = a 1-acyl-sn-glycero-3-phosphocholine + a fatty acid + H(+). Its function is as follows. Snake venom phospholipase A2 (PLA2) that shows anticoagulant activities, strong myolytic activity, infiltration of polymorphonuclear cells, and edema in stromal tissues. Induces cell death of Jurkat cells in a concentration-dependent manner. Shows a low phospholipase A2 activity. PLA2 catalyzes the calcium-dependent hydrolysis of the 2-acyl groups in 3-sn-phosphoglycerides. This is Basic phospholipase A2 BP-II from Protobothrops flavoviridis (Habu).